The primary structure comprises 407 residues: Arginine biosynthesis bifunctional protein ArgJ (407 aa).

The substrate site is built by Thr-157, Lys-183, Thr-194, Glu-280, Asn-402, and Thr-407. Thr-194 acts as the Nucleophile in catalysis.

It belongs to the ArgJ family. As to quaternary structure, heterotetramer of two alpha and two beta chains.

It localises to the cytoplasm. It catalyses the reaction N(2)-acetyl-L-ornithine + L-glutamate = N-acetyl-L-glutamate + L-ornithine. The catalysed reaction is L-glutamate + acetyl-CoA = N-acetyl-L-glutamate + CoA + H(+). The protein operates within amino-acid biosynthesis; L-arginine biosynthesis; L-ornithine and N-acetyl-L-glutamate from L-glutamate and N(2)-acetyl-L-ornithine (cyclic): step 1/1. It participates in amino-acid biosynthesis; L-arginine biosynthesis; N(2)-acetyl-L-ornithine from L-glutamate: step 1/4. Functionally, catalyzes two activities which are involved in the cyclic version of arginine biosynthesis: the synthesis of N-acetylglutamate from glutamate and acetyl-CoA as the acetyl donor, and of ornithine by transacetylation between N(2)-acetylornithine and glutamate. The sequence is that of Arginine biosynthesis bifunctional protein ArgJ from Bacillus anthracis.